A 208-amino-acid chain; its full sequence is 3-demethoxyubiquinol 3-hydroxylase (208 aa).

Residues glutamate 57, glutamate 87, histidine 90, glutamate 139, glutamate 171, and histidine 174 each contribute to the Fe cation site.

It belongs to the COQ7 family. Requires Fe cation as cofactor.

The protein resides in the cell membrane. The enzyme catalyses a 5-methoxy-2-methyl-3-(all-trans-polyprenyl)benzene-1,4-diol + AH2 + O2 = a 3-demethylubiquinol + A + H2O. Its pathway is cofactor biosynthesis; ubiquinone biosynthesis. Its function is as follows. Catalyzes the hydroxylation of 2-nonaprenyl-3-methyl-6-methoxy-1,4-benzoquinol during ubiquinone biosynthesis. The chain is 3-demethoxyubiquinol 3-hydroxylase from Burkholderia lata (strain ATCC 17760 / DSM 23089 / LMG 22485 / NCIMB 9086 / R18194 / 383).